The following is a 393-amino-acid chain: Serine/threonine protein kinase AFUB_078980 (393 aa).

Positions 61–390 constitute a Protein kinase domain; it reads YQVLSKLGFG…APELLTDPWL (330 aa). ATP-binding positions include 67–75 and Lys90; that span reads LGFGANSTV. Residue Asp190 is the Proton acceptor of the active site.

Belongs to the protein kinase superfamily. CMGC Ser/Thr protein kinase family.

The catalysed reaction is L-seryl-[protein] + ATP = O-phospho-L-seryl-[protein] + ADP + H(+). The enzyme catalyses L-threonyl-[protein] + ATP = O-phospho-L-threonyl-[protein] + ADP + H(+). Functionally, serine/threonine protein kinase; part of the subtelomeric hrmA-associated cluster (HAC) containing genes that alter the hyphal surface (such as reduced total chitin or increased beta-glucan exposure) and perturb inter-hyphal interactions within the developing biofilms, resulting in a loss of vertically aligned polarized growing filaments. Consequently, this hypoxia-typic morphotype (called H-MORPH) with altered biofilm architecture leads to increased hypoxia fitness, increased host inflammation, rapid disease progression, and mortality in a murine model of invasive aspergillosis. This Aspergillus fumigatus (strain CBS 144.89 / FGSC A1163 / CEA10) (Neosartorya fumigata) protein is Serine/threonine protein kinase AFUB_078980.